Consider the following 160-residue polypeptide: Na(+)/H(+) antiporter subunit E1 (160 aa).

Helical transmembrane passes span 1–21 (MAIQ…VTGS), 27–47 (FILG…VLPG), 49–69 (FYLI…IELI), and 101–121 (WQIV…VLGI).

It belongs to the CPA3 antiporters (TC 2.A.63) subunit E family. In terms of assembly, may form a heterooligomeric complex that consists of seven subunits: mnhA1, mnhB1, mnhC1, mnhD1, mnhE1, mnhF1 and mnhG1.

The protein localises to the cell membrane. In terms of biological role, mnh complex is a Na(+)/H(+) antiporter involved in Na(+) excretion. This is Na(+)/H(+) antiporter subunit E1 (mnhE1) from Staphylococcus saprophyticus subsp. saprophyticus (strain ATCC 15305 / DSM 20229 / NCIMB 8711 / NCTC 7292 / S-41).